The chain runs to 545 residues: Heparanase (545 aa).

Positions 1-37 (MLACRKPGLRPPLLLLLPLLGPLGPCSPGTPAAAAPA) are cleaved as a signal peptide. Residue 64 to 66 (DAN) coordinates heparan sulfate group. Residues 112 to 159 (PAFEERSYWLSQSNQDICKSGSIPSDVEEKLRLEWPFQEQVLLREQYQ) constitute a propeptide, linker peptide. Cysteines 129 and 181 form a disulfide. 160-164 (KKFTN) lines the heparan sulfate group pocket. Residues N164 and N219 are each glycosylated (N-linked (GlcNAc...) asparagine). E227 (proton donor) is an active-site residue. Residues 272–282 (QPRRNTVKMLK), H298, and R305 each bind heparan sulfate group. The segment at 290–419 (EVIDSVTWHH…LLFKKLVGNK (130 aa)) is required for heterodimerization with the heparanase 8 kDa subunit. Residue E345 is the Nucleophile of the active site. Residues 350-352 (FGG) and 391-393 (GNY) each bind heparan sulfate group. Cysteines 439 and 544 form a disulfide. N-linked (GlcNAc...) asparagine glycosylation is present at N461. The tract at residues 529 to 545 (FSYGFFVIRNAKVAACI) is required for transferring proheparanase to the Golgi apparatus, secretion and subsequent enzyme activity and for enhancement of PKB/AKT1 phosphorylation.

It belongs to the glycosyl hydrolase 79 family. As to quaternary structure, heterodimer; heterodimer formation between the 8 kDa and the 50 kDa subunits is required for enzyme activity. Interacts with TF; the interaction, inhibited by heparin, enhances the generation of activated factor X and activates coagulation. Interacts with HRG; the interaction is enhanced at acidic pH, partially inhibits binding of HPSE to cell surface receptors and modulates its enzymatic activity. Interacts with SDC1; the interaction enhances the shedding of SDC1. Interacts with HPSE2. Proteolytically processed. The cleavage of the 65 kDa form leads to the generation of a linker peptide, and the 8 kDa and the 50 kDa products. The active form, the 8/50 kDa heterodimer, is resistant to degradation. Complete removal of the linker peptide appears to be a prerequisite to the complete activation of the enzyme. In terms of processing, N-glycosylated. Glycosylation of the 50 kDa subunit appears to be essential for its solubility. Highly expressed in placenta and weakly in the kidney, lung, spleen and uterus.

It is found in the lysosome membrane. Its subcellular location is the secreted. The protein localises to the nucleus. It carries out the reaction endohydrolysis of (1-&gt;4)-beta-D-glycosidic bonds of heparan sulfate chains in heparan sulfate proteoglycan.. With respect to regulation, inhibited by laminarin sulfate and, to a lower extent, by heparin, sulfamin and EDTA. Activated by calcium and magnesium. In terms of biological role, endoglycosidase that cleaves heparan sulfate proteoglycans (HSPGs) into heparan sulfate side chains and core proteoglycans. Participates in extracellular matrix (ECM) degradation and remodeling. Selectively cleaves the linkage between a glucuronic acid unit and an N-sulfo glucosamine unit carrying either a 3-O-sulfo or a 6-O-sulfo group. Can also cleave the linkage between a glucuronic acid unit and an N-sulfo glucosamine unit carrying a 2-O-sulfo group, but not linkages between a glucuronic acid unit and a 2-O-sulfated iduronic acid moiety. Essentially inactive at neutral pH but becomes active under acidic conditions such as during tumor invasion and in inflammatory processes. Facilitates cell migration associated with metastasis, wound healing and inflammation. Enhances shedding of syndecans. Acts as a procoagulant by enhancing the generation of activated factor X/F10 in the presence of tissue factor/TF and activated factor VII/F7. Independent of its enzymatic activity, increases cell adhesion to the extracellular matrix (ECM). Enhances AKT1/PKB phosphorylation, possibly via interaction with a lipid raft-resident receptor. Plays a role in the regulation of osteogenesis. Enhances angiogenesis through up-regulation of SRC-mediated activation of VEGF. Implicated in hair follicle inner root sheath differentiation and hair homeostasis. This is Heparanase (HPSE) from Bos taurus (Bovine).